Here is a 501-residue protein sequence, read N- to C-terminus: Lysine--tRNA ligase (501 aa).

2 residues coordinate Mg(2+): E412 and E419.

This sequence belongs to the class-II aminoacyl-tRNA synthetase family. Homodimer. Mg(2+) is required as a cofactor.

Its subcellular location is the cytoplasm. It carries out the reaction tRNA(Lys) + L-lysine + ATP = L-lysyl-tRNA(Lys) + AMP + diphosphate. The protein is Lysine--tRNA ligase of Dechloromonas aromatica (strain RCB).